A 323-amino-acid chain; its full sequence is o-succinylbenzoate synthase (323 aa).

K134 acts as the Proton donor in catalysis. Mg(2+) is bound by residues D162, E191, and D214. Residue K236 is the Proton acceptor of the active site.

The protein belongs to the mandelate racemase/muconate lactonizing enzyme family. MenC type 1 subfamily. The cofactor is a divalent metal cation.

It carries out the reaction (1R,6R)-6-hydroxy-2-succinyl-cyclohexa-2,4-diene-1-carboxylate = 2-succinylbenzoate + H2O. The protein operates within quinol/quinone metabolism; 1,4-dihydroxy-2-naphthoate biosynthesis; 1,4-dihydroxy-2-naphthoate from chorismate: step 4/7. It functions in the pathway quinol/quinone metabolism; menaquinone biosynthesis. Converts 2-succinyl-6-hydroxy-2,4-cyclohexadiene-1-carboxylate (SHCHC) to 2-succinylbenzoate (OSB). The polypeptide is o-succinylbenzoate synthase (Pectobacterium atrosepticum (strain SCRI 1043 / ATCC BAA-672) (Erwinia carotovora subsp. atroseptica)).